Here is a 501-residue protein sequence, read N- to C-terminus: COP9 signalosome complex subunit 3 (501 aa).

Residues 275-445 (RFEDALFLLE…VFWTELSPVP (171 aa)) form the PCI domain.

This sequence belongs to the CSN3 family. Component of the CSN complex, probably composed of csn-1, csn-2, csn-3, csn-4, csn-5, csn-6 and csn-7. Within the complex it probably interacts directly with csn-2 and csn-4. May interact with itself.

The protein resides in the cytoplasm. It is found in the nucleus. Functionally, component of the COP9 signalosome complex (CSN), a complex involved in various cellular and developmental processes. The CSN complex is an essential regulator of the ubiquitin (Ubl) conjugation pathway by mediating the deneddylation of the cullin subunits of the SCF-type E3 ligase complexes, leading to decrease the Ubl ligase activity of SCF. The CSN complex plays an essential role in embryogenesis and oogenesis and is required to regulate microtubule stability in the early embryo. Mediates mei-3/katanin targeting for degradation at the meiosis to mitosis transition via deneddylation of cul-3. This is COP9 signalosome complex subunit 3 (csn-3) from Caenorhabditis elegans.